A 152-amino-acid polypeptide reads, in one-letter code: Superoxide dismutase [Cu-Zn] (152 aa).

Cu cation-binding residues include H44, H46, and H61. Residues H61, H69, H78, and D81 each contribute to the Zn(2+) site. H118 contributes to the Cu cation binding site.

The protein belongs to the Cu-Zn superoxide dismutase family. In terms of assembly, homodimer. Cu cation serves as cofactor. The cofactor is Zn(2+).

The protein resides in the cytoplasm. The enzyme catalyses 2 superoxide + 2 H(+) = H2O2 + O2. Destroys radicals which are normally produced within the cells and which are toxic to biological systems. This chain is Superoxide dismutase [Cu-Zn], found in Drosophila pseudoobscura pseudoobscura (Fruit fly).